The primary structure comprises 652 residues: Gametogenetin (652 aa).

Disordered stretches follow at residues 1 to 39 (MGNL…MTSQ), 52 to 237 (PGSA…DSES), 251 to 273 (PSLA…GGGG), 291 to 473 (QGPL…GHKE), and 488 to 576 (LAAD…GAAN). Composition is skewed to basic and acidic residues over residues 18–30 (QPSD…RRTS) and 124–133 (RLLEASHRGQ). The interaction with GGNBP1 stretch occupies residues 123–486 (RRLLEASHRG…APTAAPALPP (364 aa)). Composition is skewed to pro residues over residues 138–149 (SLRPLKPPPPPR) and 163–178 (QFPP…PPLP). A compositionally biased stretch (polar residues) spans 201 to 212 (ESQAGPRNQGQT). 3 stretches are compositionally biased toward low complexity: residues 213–230 (AGRA…GEMA), 251–267 (PSLA…AKAS), and 299–312 (ARPL…AQEA). Residue Ser389 is modified to Phosphoserine. The segment covering 407–422 (APALLAPPTFIFPAPT) has biased composition (low complexity). Composition is skewed to pro residues over residues 428–466 (RPGP…PPLT) and 495–513 (APSP…PVSA). The interval 491–652 (DQAPAPSPAP…HYDLQATHSN (162 aa)) is interactions with ZNF403/GGNBP2 and OAZ3. The segment covering 523-532 (TRTRRNKGSR) has biased composition (basic residues). A compositionally biased stretch (basic and acidic residues) spans 538-552 (TRKDGLHGDGPRERA).

In terms of assembly, interacts with FANCL, GGNBP1 and ZNF403/GGNBP2.

In terms of biological role, may be involved in spermatogenesis. The protein is Gametogenetin (GGN) of Homo sapiens (Human).